The chain runs to 198 residues: Snake venom metalloproteinase BpirMP (198 aa).

Positions 1 to 197 (TYIEVAVVAD…HNPQCILNEP (197 aa)) constitute a Peptidase M12B domain. Residues glutamate 4 and aspartate 88 each coordinate Ca(2+). Cystine bridges form between cysteine 112/cysteine 192, cysteine 152/cysteine 176, and cysteine 154/cysteine 159. Histidine 137 provides a ligand contact to Zn(2+). Glutamate 138 is an active-site residue. Residues histidine 141 and histidine 147 each contribute to the Zn(2+) site. 2 residues coordinate Ca(2+): cysteine 192 and asparagine 195.

It belongs to the venom metalloproteinase (M12B) family. P-I subfamily. Monomer. Zn(2+) is required as a cofactor. As to expression, expressed by the venom gland.

The protein localises to the secreted. Inhibited by the chelating agents EDTA, EGTA and 1,10-phenanthroline. Is not inhibited by serine proteinase inhibitors aprotinin, leupeptin and benzamidine. In terms of biological role, zinc metalloprotease that preferentially degrades Aalpha chain of fibrinogen (FGA) (at a dose of 5 ug, whereas at a dose of 10 ug, both FGA and FGB are completely degraded). Degrades fibrin gel in a dose-dependent manner, as well blood clots formed in vitro (thrombolytic activity). Induces hemorrhage (in the dorsal skin of mice), with an MHD of 50 ug. The basal membrane components collagen (all chains of type IV) (COL4A4), fibronectin (FN1), laminin and nidogen are all degraded by this toxin. The polypeptide is Snake venom metalloproteinase BpirMP (Bothrops pirajai (Piraja's lancehead)).